A 551-amino-acid chain; its full sequence is Monocarboxylic acid transporter (551 aa).

Transmembrane regions (helical) follow at residues 18–38 (NPILNISVFVVFIIVTMTVVL), 63–83 (GLAIAGDYLSAASFLGIVGAI), 90–110 (GFLYSIGFFVAWLVALLLVAE), 144–164 (VTLFYLIAQMAGAGSLVSVLL), 171–191 (WQAVVVGIVGIVMIAYVLLGG), 203–223 (AVLLVGGVAIMTVLTFVKVSG), 267–287 (LDFISLALALCLGTAGLPHVL), 307–327 (IVLIGAFYLMTLVLGYGAAAL), 355–375 (IFMALISAVAFATVLAVVAGL), 411–431 (VVIGLISIVLGILAMTQNVAF), 432–452 (LVALAFAVAASANLPTILYSL), 463–483 (VAAIYTGLISALLLIFLSPAV), and 503–523 (NPGLVSIPLAFIAGWIGTLVG).

This sequence belongs to the sodium:solute symporter (SSF) (TC 2.A.21) family.

Its subcellular location is the cell membrane. In terms of biological role, acts as a secondary carrier for acetate, propionate and pyruvate. Has high affinity for acetate and propionate and lower affinity for pyruvate. Driven by the electrochemical proton potential. This chain is Monocarboxylic acid transporter, found in Corynebacterium glutamicum (strain ATCC 13032 / DSM 20300 / JCM 1318 / BCRC 11384 / CCUG 27702 / LMG 3730 / NBRC 12168 / NCIMB 10025 / NRRL B-2784 / 534).